The primary structure comprises 470 residues: Poly(A) polymerase catalytic subunit (470 aa).

Residues Asp192 and Asp194 contribute to the active site.

This sequence belongs to the poxviridae poly(A) polymerase catalytic subunit family. As to quaternary structure, heterodimer of a large (catalytic) subunit and a small (regulatory) subunit.

It catalyses the reaction RNA(n) + ATP = RNA(n)-3'-adenine ribonucleotide + diphosphate. Functionally, polymerase that creates the 3'-poly(A) tail of mRNA's. The polypeptide is Poly(A) polymerase catalytic subunit (PAPL) (Sus scrofa (Pig)).